The chain runs to 360 residues: Cannabinoid receptor 2 (360 aa).

Topologically, residues 1–33 (MAGCRELELTNGSNGGLEFNPMKEYMILSDAQQ) are extracellular. A glycan (N-linked (GlcNAc...) asparagine) is linked at Asn-11. A helical membrane pass occupies residues 34-59 (IAVAVLCTLMGLLSALENVAVLYLIL). The Cytoplasmic portion of the chain corresponds to 60 to 71 (SSQRLRRKPSYL). A helical membrane pass occupies residues 72 to 92 (FIGSLAGADFLASVIFACNFV). At 93–104 (IFHVFHGVDSRN) the chain is on the extracellular side. The helical transmembrane segment at 105–129 (IFLLKIGSVTMTFTASVGSLLLTAV) threads the bilayer. The Cytoplasmic portion of the chain corresponds to 130-149 (DRYLCLCYPPTYKALVTRGR). The chain crosses the membrane as a helical span at residues 150–172 (ALVALGVMWVLSALISYLPLMGW). Residues 173–188 (TCCPSPCSELFPLIPN) are Extracellular-facing. The chain crosses the membrane as a helical span at residues 189 to 214 (DYLLGWLLFIAILFSGIIYTYGYVLW). Topologically, residues 215–246 (KAHQHVASLAEHQDRQVPGIARMRLDVRLAKT) are cytoplasmic. Residues 247-267 (LGLVMAVLLICWFPALALMGH) traverse the membrane as a helical segment. The Extracellular segment spans residues 268-279 (SLVTTLSDKVKE). The chain crosses the membrane as a helical span at residues 280–301 (AFAFCSMLCLVNSMINPIIYAL). At 302–360 (RSGEIRSAAQHCLTGWKKYLQGLGSEGKEEAPKSSVTETEAEVKTTTGPGSRTPGCSNC) the chain is on the cytoplasmic side. Positions 327 to 360 (EGKEEAPKSSVTETEAEVKTTTGPGSRTPGCSNC) are disordered. 2 positions are modified to phosphoserine: Ser-335 and Ser-336. Thr-338 bears the Phosphothreonine mark. Residues 349 to 360 (GPGSRTPGCSNC) show a composition bias toward polar residues. At Ser-352 the chain carries Phosphoserine.

Belongs to the G-protein coupled receptor 1 family. Constitutively phosphorylated on Ser-352; phosphorylation increases cell internalization and desensitizes the receptor. In terms of tissue distribution, expressed in spleen and brain by neurons and glial cells (at protein level). Expressed in lung, testis and thymus but not in heart, liver or kidney. Expressed in cerebellum, cortex and brainstem.

It localises to the cell membrane. Its subcellular location is the cell projection. The protein localises to the dendrite. It is found in the perikaryon. In terms of biological role, heterotrimeric G protein-coupled receptor for endocannabinoid 2-arachidonoylglycerol mediating inhibition of adenylate cyclase. May function in inflammatory response, nociceptive transmission and bone homeostasis. This chain is Cannabinoid receptor 2 (Cnr2), found in Rattus norvegicus (Rat).